Reading from the N-terminus, the 103-residue chain is Large ribosomal subunit protein bL21 (103 aa).

Belongs to the bacterial ribosomal protein bL21 family. In terms of assembly, part of the 50S ribosomal subunit. Contacts protein L20.

Its function is as follows. This protein binds to 23S rRNA in the presence of protein L20. The polypeptide is Large ribosomal subunit protein bL21 (Treponema denticola (strain ATCC 35405 / DSM 14222 / CIP 103919 / JCM 8153 / KCTC 15104)).